The following is a 652-amino-acid chain: Probable endo-1,3(4)-beta-glucanase AFUB_029980 (652 aa).

Positions 1 to 21 are cleaved as a signal peptide; sequence MAPSSLLLSVGSLITSSLVSA. Residues 36 to 289 form the GH16 domain; it reads ESWQGESFIN…WAGNVFAEST (254 aa). Asparagine 64 carries an N-linked (GlcNAc...) asparagine glycan. Residue glutamate 145 is the Nucleophile of the active site. Glutamate 150 functions as the Proton donor in the catalytic mechanism. N-linked (GlcNAc...) asparagine glycans are attached at residues asparagine 200 and asparagine 208. A disordered region spans residues 379-423; that stretch reads NTVATSAADHATPSSAETTTVPAATGAPSVSATEGGDSELESTST. The segment covering 390-410 has biased composition (polar residues); the sequence is TPSSAETTTVPAATGAPSVSA. N-linked (GlcNAc...) asparagine glycosylation occurs at asparagine 453. The tract at residues 509 to 551 is disordered; it reads SEIPTAPPEPVSQAVSTGSFDDSDTAQGDSEEQGSIASASVAP. Acidic residues predominate over residues 529-540; sequence DDSDTAQGDSEE. Asparagine 630 carries the GPI-anchor amidated asparagine lipid modification. The propeptide at 631 to 652 is removed in mature form; it reads GANRMSVGLSGLIGVMFIAALA.

This sequence belongs to the glycosyl hydrolase 16 family.

The protein resides in the cell membrane. The catalysed reaction is Endohydrolysis of (1-&gt;3)- or (1-&gt;4)-linkages in beta-D-glucans when the glucose residue whose reducing group is involved in the linkage to be hydrolyzed is itself substituted at C-3.. Functionally, mixed-linked glucanase involved in the degradation of complex natural cellulosic substrates. In Aspergillus fumigatus (strain CBS 144.89 / FGSC A1163 / CEA10) (Neosartorya fumigata), this protein is Probable endo-1,3(4)-beta-glucanase AFUB_029980.